Reading from the N-terminus, the 153-residue chain is Deoxyuridine 5'-triphosphate nucleotidohydrolase (153 aa).

DUMP-binding residues include Ser75, Gly88, Asp91, Tyr94, Lys99, Arg143, Phe148, and Gly149.

Belongs to the dUTPase family. In terms of assembly, homotrimer. The cofactor is Mg(2+).

The enzyme catalyses dUTP + H2O = dUMP + diphosphate + H(+). Its pathway is pyrimidine metabolism; dUMP biosynthesis; dUMP from dCTP (dUTP route): step 2/2. Involved in nucleotide metabolism via production of dUMP, the immediate precursor of thymidine nucleotides, and decreases the intracellular concentration of dUTP so that uracil cannot be incorporated into DNA. The chain is Deoxyuridine 5'-triphosphate nucleotidohydrolase (DUT1) from Eremothecium gossypii (strain ATCC 10895 / CBS 109.51 / FGSC 9923 / NRRL Y-1056) (Yeast).